The sequence spans 218 residues: Thiopurine S-methyltransferase (218 aa).

S-adenosyl-L-methionine is bound by residues tryptophan 10, leucine 45, glutamate 66, and arginine 123.

This sequence belongs to the class I-like SAM-binding methyltransferase superfamily. TPMT family.

Its subcellular location is the cytoplasm. The enzyme catalyses S-adenosyl-L-methionine + a thiopurine = S-adenosyl-L-homocysteine + a thiopurine S-methylether.. This is Thiopurine S-methyltransferase from Shewanella baltica (strain OS185).